The following is a 298-amino-acid chain: Bifunctional protein FolD (298 aa).

NADP(+) contacts are provided by residues 166–168, serine 191, and isoleucine 232; that span reads GRS.

Belongs to the tetrahydrofolate dehydrogenase/cyclohydrolase family. In terms of assembly, homodimer.

It catalyses the reaction (6R)-5,10-methylene-5,6,7,8-tetrahydrofolate + NADP(+) = (6R)-5,10-methenyltetrahydrofolate + NADPH. The enzyme catalyses (6R)-5,10-methenyltetrahydrofolate + H2O = (6R)-10-formyltetrahydrofolate + H(+). It functions in the pathway one-carbon metabolism; tetrahydrofolate interconversion. Its function is as follows. Catalyzes the oxidation of 5,10-methylenetetrahydrofolate to 5,10-methenyltetrahydrofolate and then the hydrolysis of 5,10-methenyltetrahydrofolate to 10-formyltetrahydrofolate. The polypeptide is Bifunctional protein FolD (Maricaulis maris (strain MCS10) (Caulobacter maris)).